A 313-amino-acid chain; its full sequence is Peptidyl-prolyl cis-trans isomerase 9 (313 aa).

A PPIase cyclophilin-type domain is found at 9-174; it reads FLDMALDEKP…AKVRIFNSGE (166 aa). Basic and acidic residues-rich tracts occupy residues 216–230 and 253–269; these read EERESDFSSKTESSR and RGDRNRRTQRADRKDDF. 2 disordered regions span residues 216–274 and 288–313; these read EERE…IAVR and TPEHWRRNAPSKWQQGSYTHPVDLQP.

This sequence belongs to the cyclophilin-type PPIase family.

The enzyme catalyses [protein]-peptidylproline (omega=180) = [protein]-peptidylproline (omega=0). Its function is as follows. PPIases accelerate the folding of proteins. It catalyzes the cis-trans isomerization of proline imid ic peptide bonds in oligopeptides. Thought to function as a catalyst in the folding and modification of cuticle collagens. The chain is Peptidyl-prolyl cis-trans isomerase 9 from Caenorhabditis briggsae.